Here is a 128-residue protein sequence, read N- to C-terminus: Small ribosomal subunit protein uS11m (128 aa).

This sequence belongs to the universal ribosomal protein uS11 family.

The protein localises to the mitochondrion. In Prototheca wickerhamii, this protein is Small ribosomal subunit protein uS11m (RPS11).